The primary structure comprises 578 residues: Polypeptide N-acetylgalactosaminyltransferase 4 (578 aa).

The Cytoplasmic segment spans residues 1 to 12; it reads MAVRWTWAGKSC. The helical; Signal-anchor for type II membrane protein transmembrane segment at 13–35 threads the bilayer; the sequence is LLLALLTLAYILVEFSVSTLYAS. At 36–578 the chain is on the lumenal side; that stretch reads PGAGGARELG…DKNQLWRFEK (543 aa). 5 disulfides stabilise this stretch: Cys-124/Cys-357, Cys-348/Cys-421, Cys-457/Cys-477, Cys-503/Cys-518, and Cys-547/Cys-565. A catalytic subdomain A region spans residues 134–243; the sequence is LPTTSVIIAF…TGWLEPLLER (110 aa). Residues Asp-175 and Arg-204 each coordinate substrate. Asp-227 and His-229 together coordinate Mn(2+). The interval 303–365 is catalytic subdomain B; it reads PIRSPTMAGG…PCSHVGHVFP (63 aa). Trp-334 provides a ligand contact to substrate. His-362 contacts Mn(2+). Tyr-370 lines the substrate pocket. The Ricin B-type lectin domain maps to 444–577; the sequence is WHGAIRSMGI…LDKNQLWRFE (134 aa). N-linked (GlcNAc...) asparagine glycosylation is present at Asn-471.

This sequence belongs to the glycosyltransferase 2 family. GalNAc-T subfamily. It depends on Mn(2+) as a cofactor. In terms of tissue distribution, highly expressed in sublingual gland, stomach, colon, small intestine and cervix. Expressed at intermediate levels in kidney, ovary, lung and uterus. Weakly expressed in spleen, liver, heart and brain. Not expressed in submandibular and parotid glands, skeletal muscle and testis.

The protein localises to the golgi apparatus membrane. The catalysed reaction is L-seryl-[protein] + UDP-N-acetyl-alpha-D-galactosamine = a 3-O-[N-acetyl-alpha-D-galactosaminyl]-L-seryl-[protein] + UDP + H(+). It catalyses the reaction L-threonyl-[protein] + UDP-N-acetyl-alpha-D-galactosamine = a 3-O-[N-acetyl-alpha-D-galactosaminyl]-L-threonyl-[protein] + UDP + H(+). It functions in the pathway protein modification; protein glycosylation. Its function is as follows. Catalyzes the initial reaction in O-linked oligosaccharide biosynthesis, the transfer of an N-acetyl-D-galactosamine residue to a serine or threonine residue on the protein receptor. Has a highest activity toward EA2 peptide substrate and a much lower activity with EPO-T, Muc2, Muc1a, Muc1b. The sequence is that of Polypeptide N-acetylgalactosaminyltransferase 4 (Galnt4) from Mus musculus (Mouse).